A 394-amino-acid chain; its full sequence is Stabilizer of axonemal microtubules 2 (394 aa).

6 mn regions span residues 110–122, 144–158, 244–256, 278–292, 312–324, and 346–360; these read STTF…PQEI, DTSH…QLEV, NSTS…PYQA, KSTT…EICR, LSTF…PHEL, and VTMY…KQEI.

This sequence belongs to the FAM154 family.

The sequence is that of Stabilizer of axonemal microtubules 2 (Saxo2) from Mus musculus (Mouse).